A 270-amino-acid chain; its full sequence is Indole-3-glycerol phosphate synthase (270 aa).

It belongs to the TrpC family.

It catalyses the reaction 1-(2-carboxyphenylamino)-1-deoxy-D-ribulose 5-phosphate + H(+) = (1S,2R)-1-C-(indol-3-yl)glycerol 3-phosphate + CO2 + H2O. It functions in the pathway amino-acid biosynthesis; L-tryptophan biosynthesis; L-tryptophan from chorismate: step 4/5. This chain is Indole-3-glycerol phosphate synthase, found in Beutenbergia cavernae (strain ATCC BAA-8 / DSM 12333 / CCUG 43141 / JCM 11478 / NBRC 16432 / NCIMB 13614 / HKI 0122).